The following is a 701-amino-acid chain: MGDNIVINLNNVSRSYGNVKVIEKLNFTINKGTINSLIGSSGSGKTTILKTILGKLKQDDGIVQVFGKEPCGKGSEIPGSSVGYAPQDVCLYNEITIEETLSFFASIHRMPKDEYIKKRDSLVEILELPSLSKIISELSGGQQRRVSLATALIHSPKLLILDEPTVGVCPLVSSKIWEHLIFLTKNFGVTIIITTHYLQECRSCDNIFLLRNGRILESGPPNYLLSKYECSLLEDVYYKLCRGDEEISLQLIDSKNNEKINRDINTSIPLEFISNGANINNDDILISNTNKPIIKKDAKIYKERLSDFKNKLQIWFSHSITISIRKLTQMYRLKFPLVFEIISPSLLITLFFLAIGNVPHDLKFGIKNIDSGSLSGDFINALSDGNNIFNFIQINDTSNAIQMIESSDLWGLIDIPVNFTNGMINKLFNPLEKSFENSEMEIYMDLSNFQMNLMVDVQFQKAFNKIANDSGIKLLPTNFHAVYGDQNANFNWFLAPAMICIITYVHCMNFLSITFVREKNDGTRDRILLYGVSPVSNVLGHILAHIPILLVQFSIQLLIAVFAFGVPIKGNIVLIYLFFILINTVGMCQGILISLISKAEVDAVQLCLAIFICSLCMAGIIWPTEAIITFGWISNLVPTKWSGLALRGIMIKDLPFSHQHIWKSLIIIISYIIGTFSLIVISTPIGDRNFNFKKLFKRIKK.

The ABC transporter domain maps to 7–237 (INLNNVSRSY…YECSLLEDVY (231 aa)). 39–46 (GSSGSGKT) contacts ATP. 6 helical membrane-spanning segments follow: residues 335–355 (FPLV…FLAI), 493–513 (FLAP…FLSI), 541–561 (HILA…LIAV), 574–596 (LIYL…ISLI), 608–628 (LAIF…EAII), and 665–685 (LIII…STPI). One can recognise an ABC transmembrane type-2 domain in the interval 459 to 686 (FQKAFNKIAN…SLIVISTPIG (228 aa)).

The protein belongs to the ABC transporter superfamily. ABCG family.

It localises to the membrane. This chain is ABC transporter G family member 23 (abcG23), found in Dictyostelium discoideum (Social amoeba).